Here is a 266-residue protein sequence, read N- to C-terminus: Urease accessory protein UreD (266 aa).

This sequence belongs to the UreD family. UreD, UreF and UreG form a complex that acts as a GTP-hydrolysis-dependent molecular chaperone, activating the urease apoprotein by helping to assemble the nickel containing metallocenter of UreC. The UreE protein probably delivers the nickel.

Its subcellular location is the cytoplasm. Functionally, required for maturation of urease via the functional incorporation of the urease nickel metallocenter. The sequence is that of Urease accessory protein UreD from Jannaschia sp. (strain CCS1).